A 127-amino-acid polypeptide reads, in one-letter code: Protein ApaG (127 aa).

The region spanning 3 to 127 is the ApaG domain; it reads DDPRYRVEVE…FVLSVPRTLH (125 aa).

In Xanthomonas oryzae pv. oryzae (strain MAFF 311018), this protein is Protein ApaG.